The sequence spans 635 residues: Putative adagio-like protein 2 (635 aa).

A compositionally biased stretch (acidic residues) spans 1–25 (MEWDSDSEGSGDEEEEEEEEEEEGV). The interval 1-32 (MEWDSDSEGSGDEEEEEEEEEEEGVEVGGGGD) is disordered. The PAS domain occupies 44-123 (ALAIEGVLGA…TDIRRCLEEG (80 aa)). The residue at position 91 (Cys-91) is an S-4a-FMN cysteine. An F-box domain is found at 209–255 (SDLFLLSDEVLCQKILSRLSPRDIASVNSVCKRLYHLTRNDDLWRMV). Kelch repeat units follow at residues 371–421 (RLVL…TLDG), 423–474 (KLVV…VYDG), 476–530 (KILM…PPPR), and 542–594 (RILI…VVGG).

It belongs to the ADAGIO family. FMN binds covalently to cysteine after exposure to blue light and is reversed in the dark.

The protein localises to the nucleus. It functions in the pathway protein modification; protein ubiquitination. In terms of biological role, component of an E3 ubiquitin ligase complex that plays a central role in blue light-dependent circadian cycles. Acts as a blue light photoreceptor, due to the presence of FMN, that mediates light-regulated protein degradation of critical clock components by targeting them to the proteasome complex. This Oryza sativa subsp. japonica (Rice) protein is Putative adagio-like protein 2.